The primary structure comprises 3412 residues: Genome polyprotein (3412 aa).

The Cytoplasmic segment spans residues 1–104 (MSGRKAQGKT…LSSRKRRSSE (104 aa)). The interval 38–72 (PGPSRGVQGFIFFFLFNILTGKKLTTHLKRLWRML) is hydrophobic; homodimerization of capsid protein C. The propeptide at 102-121 (SSEMTMMPLLILSMVILGGG) is ER anchor for the capsid protein C, removed in mature form by serine protease NS3. The helical transmembrane segment at 105-125 (MTMMPLLILSMVILGGGVTLV) threads the bilayer. The Extracellular portion of the chain corresponds to 126–244 (RKNRWLLLNV…GERQLQKIER (119 aa)). 2 N-linked (GlcNAc...) asparagine; by host glycosylation sites follow: Asn134 and Asn150. A helical transmembrane segment spans residues 245-265 (WLVRNPFFAVTALAIAYLVGN). At 266-270 (NKTQR) the chain is on the cytoplasmic side. A helical transmembrane segment spans residues 271–285 (VVIALLVLAVGPAYS). Residues 286–730 (AHCIGITDRD…TVFGSAFQGL (445 aa)) lie on the Extracellular side of the membrane. Cystine bridges form between Cys288-Cys315, Cys345-Cys401, Cys345-Cys406, Cys359-Cys390, Cys377-Cys401, Cys377-Cys406, Cys467-Cys568, and Cys585-Cys615. The segment at 383 to 396 (DRGWGNGCGLFGKG) is fusion peptide. Residues 731-751 (FGGLSWITKVIMGAVLIWVGI) form a helical membrane-spanning segment. The Extracellular portion of the chain corresponds to 752-757 (NTRNMT). The chain crosses the membrane as a helical span at residues 758–778 (MSMSMILVGVIMMFLSLGVGA). Residues 779-1132 (DQGCAVNFGK…LVRSWVTAGE (354 aa)) are Extracellular-facing. 6 cysteine pairs are disulfide-bonded: Cys782/Cys793, Cys833/Cys921, Cys957/Cys1002, Cys1058/Cys1107, Cys1069/Cys1091, and Cys1090/Cys1094. N-linked (GlcNAc...) asparagine; by host glycans are attached at residues Asn908 and Asn986. Residues 1133–1153 (VHAVPFGLVSMMIAMEVVLRK) form a helical membrane-spanning segment. At 1154–1201 (RQGPKQMLVGGIILLGAMLVGQVTMLDLVKLIVAVGLHFHEINNGGDA) the chain is on the cytoplasmic side. Residues 1202–1222 (MYMALIASFSIRPGLLIGFGL) form a helical membrane-spanning segment. At 1223 to 1287 (RTLWSPRERL…ILPLMALLTP (65 aa)) the chain is on the lumenal side. The helical transmembrane segment at 1288–1308 (VTMYEVRMATMLFCTVVIVGV) threads the bilayer. Residues 1309-1355 (LHQNSKDTSMQKTIPIVALTLTSYMGLTQPFLGLCAYMSTQVFGRRS) lie on the Cytoplasmic side of the membrane. Residues 1356–1376 (IPVNEALAAAGLVGVLAGLAF) form a helical membrane-spanning segment. The Lumenal segment spans residues 1377–1378 (QD). A helical transmembrane segment spans residues 1379–1399 (MENFLGPIAVGGILMMLVSVA). Residues 1400–1456 (GKVDGLELKKLGEVSWEEEAEISGSSSRYDVALSEQGEFKLLSEDKVPWDQIVMTSL) are Cytoplasmic-facing. The interval 1407-1446 (LKKLGEVSWEEEAEISGSSSRYDVALSEQGEFKLLSEDKV) is interacts with and activates NS3 protease. Residues 1457 to 1477 (ALVGAAIHPFALLLVLGGWVL) constitute an intramembrane region (helical). Residues 1478–2157 (HIKGARRSGD…RNALSMMPEA (680 aa)) lie on the Cytoplasmic side of the membrane. In terms of domain architecture, Peptidase S7 spans 1485–1665 (SGDVLWDIPT…EVKEESKEEL (181 aa)). Active-site charge relay system; for serine protease NS3 activity residues include His1537, Asp1561, and Ser1622. The region spanning 1669-1825 (PTMLKKGMTT…HSNGEIEDVQ (157 aa)) is the Helicase ATP-binding domain. The important for RNA-binding stretch occupies residues 1673–1676 (KKGM). ATP is bound at residue 1682–1689 (FHPGAGKT). Positions 1773-1776 (DEAH) match the DEAH box motif. The Helicase C-terminal domain maps to 1820 to 1997 (EIEDVQTDIP…VRGGMVAPLY (178 aa)). An N6-acetyllysine; by host modification is found at Lys1877. The disordered stretch occupies residues 1942-1961 (AAQRRGRIGRNPNRDGDSYY). A helical transmembrane segment spans residues 2158–2178 (MTIVMLFILAGLLTSGMVIFF). Residues 2179–2186 (MSPKGMSR) lie on the Lumenal side of the membrane. The helical intramembrane region spans 2187–2207 (MSMAMGTMAGSGYLMFLGGVK). At 2208-2209 (PT) the chain is on the lumenal side. The chain crosses the membrane as a helical span at residues 2210–2230 (HISYVMLIFFVLMVVIIPEPG). Residues 2231–2241 (QQRSIQDNQVA) lie on the Cytoplasmic side of the membrane. The helical transmembrane segment at 2242-2262 (YLIIGILTLLSVVAANELGML) threads the bilayer. Over 2263–2293 (EKTKEDFFGKRNIATSGGTIPWSWPDLDLKP) the chain is Lumenal. Positions 2294-2314 (GAAWTVYVGIVTMLSPMLHHW) form an intramembrane region, helical. Over 2315-2360 (IKVEYGNLSLSGIAQSASVLSFMDKGVPFMKMNISVVILLVSGWNS) the chain is Lumenal. Residues 2361–2380 (ITVIPLLCGVGGAMLHWTLI) traverse the membrane as a helical segment. The Cytoplasmic portion of the chain corresponds to 2381–2421 (LPGIKAQQSKLAQKRVFHGVAKNPVVDGNPTADIEEAPEMP). The chain crosses the membrane as a helical span at residues 2422–2442 (ALYEKKLALYLLLALSLMSVA). At 2443–2445 (MCR) the chain is on the lumenal side. A helical membrane pass occupies residues 2446–2466 (TPFSLAEGIVLSSAALGPLIE). At 2467–3411 (GNTSLLWNGP…VDADLQPGEL (945 aa)) the chain is on the cytoplasmic side. The region spanning 2508 to 2772 (GSANGKTLGE…DVILPIGTRS (265 aa)) is the mRNA cap 0-1 NS5-type MT domain. Residue Ser2563 participates in S-adenosyl-L-methionine binding. Residue Ser2563 is modified to Phosphoserine. The active-site For 2'-O-MTase activity is Lys2568. Gly2593, Trp2594, Thr2611, Leu2612, Asp2638, and Ile2639 together coordinate S-adenosyl-L-methionine. Asp2653 (for 2'-O-MTase activity) is an active-site residue. S-adenosyl-L-methionine is bound at residue Ile2654. Catalysis depends on for 2'-O-MTase activity residues Lys2689 and Glu2725. Tyr2727 provides a ligand contact to S-adenosyl-L-methionine. The Nuclear localization signal signature appears at 2879–2912 (RKIMRVVNRWLFRHLAREKKPRLCTKEEFIAKVR). The Zn(2+) site is built by Glu2946, His2950, Cys2955, and Cys2958. In terms of domain architecture, RdRp catalytic spans 3036 to 3188 (GGFYADDTAG…KPVDDRFGLA (153 aa)). Zn(2+) contacts are provided by His3223, Cys3239, and Cys3358.

It in the N-terminal section; belongs to the class I-like SAM-binding methyltransferase superfamily. mRNA cap 0-1 NS5-type methyltransferase family. In terms of assembly, homodimer. Interacts (via N-terminus) with host EXOC1 (via C-terminus); this interaction results in EXOC1 degradation through the proteasome degradation pathway. Forms heterodimers with envelope protein E in the endoplasmic reticulum and Golgi. As to quaternary structure, homodimer; in the endoplasmic reticulum and Golgi. Interacts with protein prM. Interacts with non-structural protein 1. In terms of assembly, homodimer; Homohexamer when secreted. Interacts with envelope protein E. Interacts (via N-terminus) with serine protease NS3. As to quaternary structure, forms a heterodimer with serine protease NS3. May form homooligomers. In terms of assembly, forms a heterodimer with NS2B. Interacts with non-structural protein 2A (via N-terminus). Interacts with NS4B. Interacts with unphosphorylated RNA-directed RNA polymerase NS5; this interaction stimulates RNA-directed RNA polymerase NS5 guanylyltransferase activity. NS3 interacts with host PDCD6IP; this interaction contributes to virion release. Interacts with serine protease NS3. As to quaternary structure, homodimer. Interacts with host STAT2; this interaction prevents the establishment of cellular antiviral state. Interacts with serine protease NS3. Interacts with host TRIM23; this interaction leads to NS5 ubiquitination. Post-translationally, specific enzymatic cleavages in vivo yield mature proteins. The nascent capsid protein C contains a C-terminal hydrophobic domain that act as a signal sequence for translocation of prM into the lumen of the ER. Mature capsid protein C is cleaved at a site upstream of this hydrophobic domain by NS3. prM is cleaved in post-Golgi vesicles by a host furin, releasing the mature small envelope protein M, and peptide pr. Non-structural protein 2A-alpha, a C-terminally truncated form of non-structural protein 2A, results from partial cleavage by NS3. Specific enzymatic cleavages in vivo yield mature proteins peptide 2K acts as a signal sequence and is removed from the N-terminus of NS4B by the host signal peptidase in the ER lumen. Signal cleavage at the 2K-4B site requires a prior NS3 protease-mediated cleavage at the 4A-2K site. In terms of processing, cleaved in post-Golgi vesicles by a host furin, releasing the mature small envelope protein M, and peptide pr. This cleavage is incomplete as up to 30% of viral particles still carry uncleaved prM. N-glycosylated. Post-translationally, N-glycosylated. The excreted form is glycosylated and this is required for efficient secretion of the protein from infected cells. In terms of processing, polyubiquitinated; ubiquitination is probably mediated by host TRIM23 and is prerequisite for NS5-STAT2 interaction. NS5 is not ISGylated or sumoylated. Acetylated by host KAT5. Acetylation modulates NS3 RNA-binding and unwinding activities and plays an important positive role for viral replication. Post-translationally, phosphorylated on serines residues. This phosphorylation may trigger NS5 nuclear localization.

Its subcellular location is the virion. It localises to the host nucleus. The protein localises to the host cytoplasm. It is found in the host perinuclear region. The protein resides in the secreted. Its subcellular location is the virion membrane. It localises to the host endoplasmic reticulum membrane. The enzyme catalyses Selective hydrolysis of -Xaa-Xaa-|-Yaa- bonds in which each of the Xaa can be either Arg or Lys and Yaa can be either Ser or Ala.. The catalysed reaction is RNA(n) + a ribonucleoside 5'-triphosphate = RNA(n+1) + diphosphate. It carries out the reaction a ribonucleoside 5'-triphosphate + H2O = a ribonucleoside 5'-diphosphate + phosphate + H(+). It catalyses the reaction ATP + H2O = ADP + phosphate + H(+). The enzyme catalyses a 5'-end (5'-triphosphoguanosine)-ribonucleoside in mRNA + S-adenosyl-L-methionine = a 5'-end (N(7)-methyl 5'-triphosphoguanosine)-ribonucleoside in mRNA + S-adenosyl-L-homocysteine. The catalysed reaction is a 5'-end (N(7)-methyl 5'-triphosphoguanosine)-ribonucleoside in mRNA + S-adenosyl-L-methionine = a 5'-end (N(7)-methyl 5'-triphosphoguanosine)-(2'-O-methyl-ribonucleoside) in mRNA + S-adenosyl-L-homocysteine + H(+). Plays a role in virus budding by binding to the cell membrane and gathering the viral RNA into a nucleocapsid that forms the core of a mature virus particle. During virus entry, may induce genome penetration into the host cytoplasm after hemifusion induced by the surface proteins. Can migrate to the cell nucleus where it modulates host functions. In terms of biological role, inhibits RNA silencing by interfering with host Dicer. Its function is as follows. Prevents premature fusion activity of envelope proteins in trans-Golgi by binding to envelope protein E at pH6.0. After virion release in extracellular space, gets dissociated from E dimers. Functionally, acts as a chaperone for envelope protein E during intracellular virion assembly by masking and inactivating envelope protein E fusion peptide. prM is the only viral peptide matured by host furin in the trans-Golgi network probably to avoid catastrophic activation of the viral fusion activity in acidic Golgi compartment prior to virion release. prM-E cleavage is inefficient, and many virions are only partially matured. These uncleaved prM would play a role in immune evasion. May play a role in virus budding. Exerts cytotoxic effects by activating a mitochondrial apoptotic pathway through M ectodomain. May display a viroporin activity. In terms of biological role, binds to host cell surface receptor and mediates fusion between viral and cellular membranes. Envelope protein is synthesized in the endoplasmic reticulum in the form of heterodimer with protein prM. They play a role in virion budding in the ER, and the newly formed immature particle is covered with 60 spikes composed of heterodimer between precursor prM and envelope protein E. The virion is transported to the Golgi apparatus where the low pH causes dissociation of PrM-E heterodimers and formation of E homodimers. prM-E cleavage is inefficient, and many virions are only partially matured. These uncleaved prM would play a role in immune evasion. Its function is as follows. Involved in immune evasion, pathogenesis and viral replication. Once cleaved off the polyprotein, is targeted to three destinations: the viral replication cycle, the plasma membrane and the extracellular compartment. Essential for viral replication. Required for formation of the replication complex and recruitment of other non-structural proteins to the ER-derived membrane structures. Excreted as a hexameric lipoparticle that plays a role against host immune response. Antagonizing the complement function. Binds to the host macrophages and dendritic cells. Inhibits signal transduction originating from Toll-like receptor 3 (TLR3). Functionally, component of the viral RNA replication complex that functions in virion assembly and antagonizes the host immune response. Required cofactor for the serine protease function of NS3. May have membrane-destabilizing activity and form viroporins. In terms of biological role, displays three enzymatic activities: serine protease, NTPase and RNA helicase. NS3 serine protease, in association with NS2B, performs its autocleavage and cleaves the polyprotein at dibasic sites in the cytoplasm: C-prM, NS2A-NS2B, NS2B-NS3, NS3-NS4A, NS4A-2K and NS4B-NS5. NS3 RNA helicase binds RNA and unwinds dsRNA in the 3' to 5' direction. Also plays a role in virus assembly. Its function is as follows. Regulates the ATPase activity of the NS3 helicase activity. NS4A allows NS3 helicase to conserve energy during unwinding. Functionally, functions as a signal peptide for NS4B and is required for the interferon antagonism activity of the latter. Induces the formation of ER-derived membrane vesicles where the viral replication takes place. Inhibits interferon (IFN)-induced host STAT1 phosphorylation and nuclear translocation, thereby preventing the establishment of cellular antiviral state by blocking the IFN-alpha/beta pathway. In terms of biological role, replicates the viral (+) and (-) RNA genome, and performs the capping of genomes in the cytoplasm. NS5 methylates viral RNA cap at guanine N-7 and ribose 2'-O positions. Besides its role in RNA genome replication, also prevents the establishment of cellular antiviral state by blocking the interferon-alpha/beta (IFN-alpha/beta) signaling pathway. IFN-I induces binding of NS5 to host IFN-activated transcription factor STAT2, preventing its transcriptional activity. Host TRIM23 is the E3 ligase that interacts with and polyubiquitinates NS5 to promote its binding to STAT2 and trigger IFN-I signaling inhibition. The sequence is that of Genome polyprotein from Yellow fever virus (isolate Uganda/A7094A4/1948) (YFV).